The chain runs to 305 residues: UDP-3-O-acyl-N-acetylglucosamine deacetylase (305 aa).

Positions 79, 238, and 242 each coordinate Zn(2+). Catalysis depends on H265, which acts as the Proton donor.

The protein belongs to the LpxC family. Zn(2+) is required as a cofactor.

It carries out the reaction a UDP-3-O-[(3R)-3-hydroxyacyl]-N-acetyl-alpha-D-glucosamine + H2O = a UDP-3-O-[(3R)-3-hydroxyacyl]-alpha-D-glucosamine + acetate. It functions in the pathway glycolipid biosynthesis; lipid IV(A) biosynthesis; lipid IV(A) from (3R)-3-hydroxytetradecanoyl-[acyl-carrier-protein] and UDP-N-acetyl-alpha-D-glucosamine: step 2/6. Catalyzes the hydrolysis of UDP-3-O-myristoyl-N-acetylglucosamine to form UDP-3-O-myristoylglucosamine and acetate, the committed step in lipid A biosynthesis. The sequence is that of UDP-3-O-acyl-N-acetylglucosamine deacetylase from Salmonella typhi.